We begin with the raw amino-acid sequence, 681 residues long: Conserved oligomeric Golgi complex subunit 2 (681 aa).

Belongs to the COG2 family. In terms of assembly, component of the conserved oligomeric Golgi complex which is composed of eight different subunits and is required for normal Golgi morphology and localization.

The protein localises to the golgi apparatus membrane. Its function is as follows. Required for normal Golgi morphology and function. This Caenorhabditis elegans protein is Conserved oligomeric Golgi complex subunit 2 (cogc-2).